The following is a 614-amino-acid chain: Maltose permease MAL61 (614 aa).

The segment at 1 to 48 (MKGLSSLINRKKDRNDSHLDEIENGVNATEFNSIEMEEQGKKSDFDLS) is disordered. Residues 1–108 (MKGLSSLINR…AAAWSLLVST (108 aa)) lie on the Cytoplasmic side of the membrane. The span at 38 to 48 (EQGKKSDFDLS) shows a compositional bias: basic and acidic residues. Residues 109–129 (TLIQEGYDTAILGAFYALPVF) traverse the membrane as a helical segment. Residues 130 to 144 (QKKYGSLNSNTGDYE) are Extracellular-facing. A helical transmembrane segment spans residues 145-165 (ISVSWQIGLCLCYMAGEIVGL). The Cytoplasmic portion of the chain corresponds to 166–180 (QVTGPSVDYMGNRYT). A helical transmembrane segment spans residues 181–201 (LIMALFFLAAFIFILYFCKSL). A topological domain (extracellular) is located at residue Gly202. Residues 203 to 223 (MIAVGQALCGMPWGCFQCLTV) traverse the membrane as a helical segment. Residues 224–236 (SYASEICPLALRY) are Cytoplasmic-facing. Residues 237–257 (YLTTYSNLCWTFGQLFAAGIM) form a helical membrane-spanning segment. Topologically, residues 258 to 272 (KNSQNKYANSELGYK) are extracellular. A helical transmembrane segment spans residues 273–293 (LPFALQWIWPLPLAVGIFLAP). The Cytoplasmic portion of the chain corresponds to 294–364 (ESPWWLVKKG…KDGINRRRTR (71 aa)). Residues 365–385 (IACLCWIGQCSCGASLIGYST) traverse the membrane as a helical segment. Residues 386 to 398 (YFYEKAGVSTDTA) lie on the Extracellular side of the membrane. The chain crosses the membrane as a helical span at residues 399 to 419 (FTFSIIQYCLGIAATFVSWWA). The Cytoplasmic portion of the chain corresponds to 420–427 (SKYCGRFD). The helical transmembrane segment at 428–448 (LYAFGLAFQAIMFFIIGGLGC) threads the bilayer. Residues 449–460 (SDTHGAKMGSGA) are Extracellular-facing. Residues 461-481 (LLMVVAFFYNLGIAPVVFCLV) form a helical membrane-spanning segment. At 482-493 (SEMPSSRLRTKT) the chain is on the cytoplasmic side. A helical transmembrane segment spans residues 494–514 (IILARNAYNVIQVVVTVLIMY). At 515–526 (QLNSEKWNWGAK) the chain is on the extracellular side. Residues 527-547 (SGFFWGGFCLATLAWAVVDLP) traverse the membrane as a helical segment. Residues 548–614 (ETAGRTFIEI…GRSTPSVVNK (67 aa)) lie on the Cytoplasmic side of the membrane. The interval 594–614 (KEDLETSVVDEGRSTPSVVNK) is disordered.

This sequence belongs to the major facilitator superfamily. Sugar transporter (TC 2.A.1.1) family.

The protein localises to the membrane. Functionally, transporter for maltose. The chain is Maltose permease MAL61 (MAL61) from Saccharomyces cerevisiae (Baker's yeast).